A 289-amino-acid chain; its full sequence is Agmatinase (289 aa).

The Mn(2+) site is built by His-112, Asp-135, His-137, Asp-139, Asp-216, and Asp-218.

The protein belongs to the arginase family. Agmatinase subfamily. The cofactor is Mn(2+).

It catalyses the reaction agmatine + H2O = urea + putrescine. It functions in the pathway amine and polyamine biosynthesis; putrescine biosynthesis via agmatine pathway; putrescine from agmatine: step 1/1. Its function is as follows. Catalyzes the formation of putrescine from agmatine. The polypeptide is Agmatinase (speB) (Halalkalibacterium halodurans (strain ATCC BAA-125 / DSM 18197 / FERM 7344 / JCM 9153 / C-125) (Bacillus halodurans)).